A 462-amino-acid polypeptide reads, in one-letter code: Cysteine desulfurase, mitochondrial (462 aa).

Pyridoxal 5'-phosphate is bound by residues alanine 132 to threonine 133, asparagine 212, glutamine 240, and serine 260 to histidine 262. Position 263 is an N6-(pyridoxal phosphate)lysine (lysine 263). A pyridoxal 5'-phosphate-binding site is contributed by threonine 300. Cysteine 386 (cysteine persulfide intermediate) is an active-site residue. Cysteine 386 is a [2Fe-2S] cluster binding site.

This sequence belongs to the class-V pyridoxal-phosphate-dependent aminotransferase family. NifS/IscS subfamily. Component of the mitochondrial core iron-sulfur cluster (ISC) assembly complex at least composed of the cystein desulfurase Nfs1, the scaffold protein IscU, the accessory protein bcn92/Isd11/Lyrm4, and probably fh/frataxin. Interacts with bcn92/Isd11/Lyrm4 and IscU. Requires pyridoxal 5'-phosphate as cofactor. In terms of tissue distribution, ubiquitous expression at high levels in any life stage.

The protein localises to the mitochondrion. Its subcellular location is the nucleus. It carries out the reaction (sulfur carrier)-H + L-cysteine = (sulfur carrier)-SH + L-alanine. Its activity is regulated as follows. Active when in complex with bcn92/Isd11/Lyrm4. L-cysteine binding kinetics are reduced in the presence of bcn92/Isd11/Lyrm4 and IscU. Activity is regulated by other components of the mitochondrial core iron-sulfur cluster (ISC) complex; Activity is reduced in the presence of IscU but enhanced when both IscU and fh/frataxin are present. Its function is as follows. Catalyzes the removal of elemental sulfur from cysteine to produce alanine. It supplies the inorganic sulfur for iron-sulfur (Fe-S) clusters. This Drosophila melanogaster (Fruit fly) protein is Cysteine desulfurase, mitochondrial.